The following is a 245-amino-acid chain: tRNA1(Val) (adenine(37)-N6)-methyltransferase (245 aa).

The protein belongs to the methyltransferase superfamily. tRNA (adenine-N(6)-)-methyltransferase family.

It localises to the cytoplasm. It catalyses the reaction adenosine(37) in tRNA1(Val) + S-adenosyl-L-methionine = N(6)-methyladenosine(37) in tRNA1(Val) + S-adenosyl-L-homocysteine + H(+). Its function is as follows. Specifically methylates the adenine in position 37 of tRNA(1)(Val) (anticodon cmo5UAC). The polypeptide is tRNA1(Val) (adenine(37)-N6)-methyltransferase (Escherichia coli O157:H7).